The primary structure comprises 157 residues: Probable cyclic pyranopterin monophosphate synthase (157 aa).

Substrate contacts are provided by residues Met75 to His77 and Met111 to Glu112. Residue Asp126 is part of the active site.

Belongs to the MoaC family. Homohexamer; trimer of dimers.

It carries out the reaction (8S)-3',8-cyclo-7,8-dihydroguanosine 5'-triphosphate = cyclic pyranopterin phosphate + diphosphate. The protein operates within cofactor biosynthesis; molybdopterin biosynthesis. In terms of biological role, catalyzes the conversion of (8S)-3',8-cyclo-7,8-dihydroguanosine 5'-triphosphate to cyclic pyranopterin monophosphate (cPMP). This chain is Probable cyclic pyranopterin monophosphate synthase, found in Methanosarcina mazei (strain ATCC BAA-159 / DSM 3647 / Goe1 / Go1 / JCM 11833 / OCM 88) (Methanosarcina frisia).